The following is a 90-amino-acid chain: Small ribosomal subunit protein bS16 (90 aa).

This sequence belongs to the bacterial ribosomal protein bS16 family.

This Streptococcus sanguinis (strain SK36) protein is Small ribosomal subunit protein bS16.